Consider the following 364-residue polypeptide: Histidinol-phosphate aminotransferase (364 aa).

Position 220 is an N6-(pyridoxal phosphate)lysine (Lys220).

It belongs to the class-II pyridoxal-phosphate-dependent aminotransferase family. Histidinol-phosphate aminotransferase subfamily. Homodimer. The cofactor is pyridoxal 5'-phosphate.

The catalysed reaction is L-histidinol phosphate + 2-oxoglutarate = 3-(imidazol-4-yl)-2-oxopropyl phosphate + L-glutamate. Its pathway is amino-acid biosynthesis; L-histidine biosynthesis; L-histidine from 5-phospho-alpha-D-ribose 1-diphosphate: step 7/9. The sequence is that of Histidinol-phosphate aminotransferase from Stenotrophomonas maltophilia (strain R551-3).